The following is a 389-amino-acid chain: Chorismate synthase (389 aa).

Arg-40 and Arg-46 together coordinate NADP(+). Residues 130–132 (RAS), 251–252 (QA), Gly-297, 312–316 (KPIST), and Arg-338 each bind FMN.

Belongs to the chorismate synthase family. In terms of assembly, homotetramer. FMNH2 is required as a cofactor.

It catalyses the reaction 5-O-(1-carboxyvinyl)-3-phosphoshikimate = chorismate + phosphate. The protein operates within metabolic intermediate biosynthesis; chorismate biosynthesis; chorismate from D-erythrose 4-phosphate and phosphoenolpyruvate: step 7/7. Functionally, catalyzes the anti-1,4-elimination of the C-3 phosphate and the C-6 proR hydrogen from 5-enolpyruvylshikimate-3-phosphate (EPSP) to yield chorismate, which is the branch point compound that serves as the starting substrate for the three terminal pathways of aromatic amino acid biosynthesis. This reaction introduces a second double bond into the aromatic ring system. The polypeptide is Chorismate synthase (Solibacter usitatus (strain Ellin6076)).